We begin with the raw amino-acid sequence, 496 residues long: Tyrosine-protein kinase Srms (496 aa).

An SH3 domain is found at 55-116 (PRARLFRALY…PVTYLAKATP (62 aa)). The SH2 domain maps to 124 to 216 (WYFSGISRAQ…LIQNPLLQPC (93 aa)). The region spanning 234–495 (FVLRRKLGEG…AINRRLHLGL (262 aa)) is the Protein kinase domain. ATP-binding positions include 240 to 248 (LGEGFFGEV) and lysine 262. Aspartate 354 serves as the catalytic Proton acceptor. Tyrosine 384 is subject to Phosphotyrosine; by autocatalysis.

It belongs to the protein kinase superfamily. Tyr protein kinase family. SRC subfamily. Interacts (via the SH2 and SH3 domains) with DOK1. Interacts with KHDRBS1/SAM68 and VIM. Higher expression in liver, lung, thymus and skin than in brain, kidney, heart and spleen. In skin, highly expressed in keratinocytes. Abundant in lung, liver, spleen, kidney and testis and is also detected in the cerebrum.

It localises to the cytoplasm. The catalysed reaction is L-tyrosyl-[protein] + ATP = O-phospho-L-tyrosyl-[protein] + ADP + H(+). Functionally, non-receptor tyrosine-protein kinase which phosphorylates DOK1 on tyrosine residues. Also phosphorylates KHDRBS1/SAM68 and VIM on tyrosine residues. Phosphorylation of KHDRBS1 is EGF-dependent. Phosphorylates OTUB1, promoting deubiquitination of RPTOR. This is Tyrosine-protein kinase Srms (Srms) from Mus musculus (Mouse).